The sequence spans 803 residues: H(+)/Cl(-) exchange transporter 7 (803 aa).

Positions 1-46 (MANVSKKVSWSGRDRDDEEGAPLLRRTGQPDEETPLLNGAGPGARQ) are disordered. Residues 1 to 124 (MANVSKKVSW…TAFRTVEIKR (124 aa)) are Cytoplasmic-facing. The residue at position 9 (serine 9) is a Phosphoserine. Helical transmembrane passes span 125 to 157 (WVICALIGILTGLVACFIDIVVENLAGLKYRVI) and 172 to 195 (FSLLLWATLNSAFVLVGSVIVAFI). A Selectivity filter part_1 motif is present at residues 201-205 (GSGIP). A chloride-binding site is contributed by serine 202. The helical intramembrane region spans 204-211 (IPQIKCFL). Helical transmembrane passes span 221-239 (RLKTLVIKVSGVILSVVGG) and 245-262 (EGPMIHSGSVIAAGISQG). The short motif at 243–247 (GKEGP) is the Selectivity filter part_2 element. 2 consecutive intramembrane regions (helical) follow at residues 286 to 298 (FVSAGAAAGVSAA) and 302 to 310 (PVGGVLFSL). Helical transmembrane passes span 320 to 339 (FLTWRIFFASMISTFTLNFV), 373 to 403 (IPVFIAMGVVGGILGAVFNALNYWLTMFRIR), 408 to 430 (PCLQVIEAMLVAAVTATVAFVLI), 485 to 505 (PMTLGLFTLVYFFLACWTYGL), and 510 to 533 (GVFIPSLLIGAAWGRLFGISLSYL). Residues 510–514 (GVFIP) carry the Selectivity filter part_3 motif. Phenylalanine 512 is a binding site for chloride. Positions 543-557 (GKYALMGAAAQLGGI) form an intramembrane region, helical. Residues 558–560 (VRM) constitute an intramembrane region (note=Loop between two helices). Residues 561–572 (TLSLTVIMMEAT) constitute an intramembrane region (helical). The note=Loop between two helices intramembrane region spans 573–576 (SNVT). Residues 577-595 (YGFPIMLVLMTAKIVGDVF) form a helical membrane-spanning segment. At 596–803 (IEGLYDMHIQ…GLEELSLAQT (208 aa)) the chain is on the cytoplasmic side. Residue tyrosine 600 participates in chloride binding. CBS domains are found at residues 629–693 (MSTP…VFVE) and 739–797 (MNPS…GLEE). Residues 656–658 (HNG) and 781–784 (TRKD) each bind ATP. Serine 799 carries the phosphoserine modification.

This sequence belongs to the chloride channel (TC 2.A.49) family. ClC-7/CLCN7 subfamily. Chloride channel 7 are heteromers of alpha (CLCN7) and beta (OSTM1) subunits. Liver, spleen, kidneys and brain.

It is found in the lysosome membrane. The catalysed reaction is 2 chloride(in) + H(+)(out) = 2 chloride(out) + H(+)(in). Functionally, slowly voltage-gated channel mediating the exchange of chloride ions against protons. Functions as antiporter and contributes to the acidification of the lysosome lumen and may be involved in maintaining lysosomal pH. The CLC channel family contains both chloride channels and proton-coupled anion transporters that exchange chloride or another anion for protons. The presence of conserved gating glutamate residues is typical for family members that function as antiporters. The chain is H(+)/Cl(-) exchange transporter 7 from Mus musculus (Mouse).